The chain runs to 105 residues: Integration host factor subunit alpha (105 aa).

This sequence belongs to the bacterial histone-like protein family. In terms of assembly, heterodimer of an alpha and a beta chain.

Functionally, this protein is one of the two subunits of integration host factor, a specific DNA-binding protein that functions in genetic recombination as well as in transcriptional and translational control. The sequence is that of Integration host factor subunit alpha from Azorhizobium caulinodans (strain ATCC 43989 / DSM 5975 / JCM 20966 / LMG 6465 / NBRC 14845 / NCIMB 13405 / ORS 571).